A 349-amino-acid chain; its full sequence is Methylglutaconyl-CoA hydratase 1, mitochondrial (349 aa).

A mitochondrion-targeting transit peptide spans 1–37; it reads MPPVSRILSYAPRVAIRPSSQLARPARAFAVGTVRYY.

It belongs to the enoyl-CoA hydratase/isomerase family. As to quaternary structure, homohexamer.

Its subcellular location is the mitochondrion. The enzyme catalyses (3S)-3-hydroxy-3-methylglutaryl-CoA = 3-methyl-(2E)-glutaconyl-CoA + H2O. The protein operates within amino-acid degradation; L-leucine degradation; (S)-3-hydroxy-3-methylglutaryl-CoA from 3-isovaleryl-CoA: step 3/3. Functionally, 3-methylglutaconyl-CoA hydratase that catalyzes the fifth step in the leucine degradation pathway, the reversible hydration of 3-methylglutaconyl-CoA (3-MG-CoA) to 3-hydroxy-3-methylglutaryl-CoA (HMG-CoA). Involved in vegetative growth, conidiation and in the stress response. Controls mitochondrial morphology and mitophagy, which are critical for the infectious growth of the pathogen. This chain is Methylglutaconyl-CoA hydratase 1, mitochondrial, found in Pyricularia oryzae (strain 70-15 / ATCC MYA-4617 / FGSC 8958) (Rice blast fungus).